A 662-amino-acid chain; its full sequence is Probable quinol oxidase subunit 1 (662 aa).

The next 2 membrane-spanning stretches (helical) occupy residues 14 to 34 and 58 to 78; these read WMIT…IAVI and IMYL…ALLI. A Fe(II)-heme a-binding site is contributed by H102. Helical transmembrane passes span 103–123, 140–160, 187–207, 228–248, 273–293, 311–331, 336–356, and 376–396; these read GVIM…NIVV, VSFW…IIGG, IAIQ…FVTI, FITT…LALM, FFWV…FGIY, MVWA…HHFF, GALI…PTGV, and MLFS…GVML. Residues H279, Y283, H328, and H329 each coordinate Cu cation. Positions 279–283 form a cross-link, 1'-histidyl-3'-tyrosine (His-Tyr); it reads HPEVY. H414 lines the heme a3 pocket. 5 helical membrane-spanning segments follow: residues 415–435, 451–471, 493–513, 587–604, and 608–627; these read FHYT…IFWY, CFWF…ILGL, ISTI…VSIV, PVGF…FFLI, and VIPA…YRSF. H416 is a Fe(II)-heme a binding site.

The protein belongs to the heme-copper respiratory oxidase family. Cu cation serves as cofactor. It depends on ferriheme a as a cofactor. Requires Heme A3. as cofactor.

Its subcellular location is the cell membrane. The enzyme catalyses 2 a quinol + O2 = 2 a quinone + 2 H2O. It functions in the pathway energy metabolism; oxidative phosphorylation. In terms of biological role, catalyzes quinol oxidation with the concomitant reduction of oxygen to water. In Staphylococcus aureus (strain USA300), this protein is Probable quinol oxidase subunit 1 (qoxB).